We begin with the raw amino-acid sequence, 333 residues long: Lipoyl synthase (333 aa).

The interval 1–29 (MTDSASGASAVANIATPSNEPYDATRKQK) is disordered. 7 residues coordinate [4Fe-4S] cluster: Cys-80, Cys-85, Cys-91, Cys-106, Cys-110, Cys-113, and Ser-320. A Radical SAM core domain is found at 91-309 (CFGKGTATFM…EEKAYEMGFT (219 aa)).

This sequence belongs to the radical SAM superfamily. Lipoyl synthase family. [4Fe-4S] cluster serves as cofactor.

The protein localises to the cytoplasm. The catalysed reaction is [[Fe-S] cluster scaffold protein carrying a second [4Fe-4S](2+) cluster] + N(6)-octanoyl-L-lysyl-[protein] + 2 oxidized [2Fe-2S]-[ferredoxin] + 2 S-adenosyl-L-methionine + 4 H(+) = [[Fe-S] cluster scaffold protein] + N(6)-[(R)-dihydrolipoyl]-L-lysyl-[protein] + 4 Fe(3+) + 2 hydrogen sulfide + 2 5'-deoxyadenosine + 2 L-methionine + 2 reduced [2Fe-2S]-[ferredoxin]. It functions in the pathway protein modification; protein lipoylation via endogenous pathway; protein N(6)-(lipoyl)lysine from octanoyl-[acyl-carrier-protein]: step 2/2. Catalyzes the radical-mediated insertion of two sulfur atoms into the C-6 and C-8 positions of the octanoyl moiety bound to the lipoyl domains of lipoate-dependent enzymes, thereby converting the octanoylated domains into lipoylated derivatives. This Ralstonia nicotianae (strain ATCC BAA-1114 / GMI1000) (Ralstonia solanacearum) protein is Lipoyl synthase.